A 396-amino-acid polypeptide reads, in one-letter code: Phosphoglycerate kinase (396 aa).

Substrate contacts are provided by residues 21-23 (DLN), arginine 36, 59-62 (HFGR), arginine 118, and arginine 151. Residues lysine 201, glutamate 323, and 353–356 (GGDT) contribute to the ATP site.

Belongs to the phosphoglycerate kinase family. As to quaternary structure, monomer.

Its subcellular location is the cytoplasm. The catalysed reaction is (2R)-3-phosphoglycerate + ATP = (2R)-3-phospho-glyceroyl phosphate + ADP. Its pathway is carbohydrate degradation; glycolysis; pyruvate from D-glyceraldehyde 3-phosphate: step 2/5. The sequence is that of Phosphoglycerate kinase from Brucella melitensis biotype 1 (strain ATCC 23456 / CCUG 17765 / NCTC 10094 / 16M).